The sequence spans 479 residues: Glycogen synthase (479 aa).

Position 15 (Lys-15) interacts with ADP-alpha-D-glucose.

The protein belongs to the glycosyltransferase 1 family. Bacterial/plant glycogen synthase subfamily.

It carries out the reaction [(1-&gt;4)-alpha-D-glucosyl](n) + ADP-alpha-D-glucose = [(1-&gt;4)-alpha-D-glucosyl](n+1) + ADP + H(+). It participates in glycan biosynthesis; glycogen biosynthesis. In terms of biological role, synthesizes alpha-1,4-glucan chains using ADP-glucose. This chain is Glycogen synthase, found in Pectobacterium atrosepticum (strain SCRI 1043 / ATCC BAA-672) (Erwinia carotovora subsp. atroseptica).